A 343-amino-acid polypeptide reads, in one-letter code: Methylthioribose-1-phosphate isomerase (343 aa).

Substrate-binding positions include 44-46 (RGA), Arg85, and Gln192. The active-site Proton donor is Asp233. 243–244 (NK) is a binding site for substrate.

This sequence belongs to the eIF-2B alpha/beta/delta subunits family. MtnA subfamily.

It carries out the reaction 5-(methylsulfanyl)-alpha-D-ribose 1-phosphate = 5-(methylsulfanyl)-D-ribulose 1-phosphate. The protein operates within amino-acid biosynthesis; L-methionine biosynthesis via salvage pathway; L-methionine from S-methyl-5-thio-alpha-D-ribose 1-phosphate: step 1/6. Its function is as follows. Catalyzes the interconversion of methylthioribose-1-phosphate (MTR-1-P) into methylthioribulose-1-phosphate (MTRu-1-P). In Carboxydothermus hydrogenoformans (strain ATCC BAA-161 / DSM 6008 / Z-2901), this protein is Methylthioribose-1-phosphate isomerase.